We begin with the raw amino-acid sequence, 1744 residues long: Myotubularin-related protein 5 (1744 aa).

The region spanning 14–150 (DTVAVIVLEE…IRFLTYELVE (137 aa)) is the uDENN domain. The 140-residue stretch at 165 to 304 (ELGFELIPIS…YYNSLHQRLR (140 aa)) folds into the cDENN domain. Residues 306–412 (VMFTTTSQED…LTRALPRRKH (107 aa)) enclose the dDENN domain. Residues 787-871 (KGNFDPVLAH…LYSMESFKKL (85 aa)) enclose the GRAM domain. The region spanning 996-1447 (NAHIRYAVID…PQIHMWPFLA (452 aa)) is the Myotubularin phosphatase domain. Polar residues predominate over residues 1102–1116 (TGSMTGSQQTLHSKA). Residues 1102-1123 (TGSMTGSQQTLHSKASSNEESS) are disordered. The Phorbol-ester/DAG-type zinc-finger motif lies at 1540–1590 (IHELTPFTVGARPVQCCYCTNILTRWSKAVHCKKCRIHVHEGCVNRNITIG). The PH domain occupies 1643–1743 (PPLCTGYLSK…WKECIEQVIR (101 aa)).

This sequence belongs to the protein-tyrosine phosphatase family. Non-receptor class myotubularin subfamily.

Probably acts as an adapter for other myotubularin-like phosphatases. The protein is Myotubularin-related protein 5 of Caenorhabditis elegans.